The sequence spans 276 residues: MPELPEVEVTRRGIEPFVAGRRVERVDVRTAMLRWPVPAGFAEMLRSREVLRVERRGKYLLFEVDAGWFIVHLGMTGTLRVLPNDAPPPAPAKHDHVDWIFDEFVLRFRDPRRFGAVLWHPRDAGDVHAHPLLASLGVEPFSAAFSGALLFGRTRGRTVSVKQALLAGDIVVGVGNIYASESLFRAGIRPTTAAGRVSLPRYERLADAVRATLADAIERGGSTLRDFVGSNGESGYFQLDCFVYDRAGEPCRVCGAPIRQIVQGQRSTYFCPNCQR.

Pro2 functions as the Schiff-base intermediate with DNA in the catalytic mechanism. The active-site Proton donor is Glu3. The active-site Proton donor; for beta-elimination activity is the Lys58. The DNA site is built by His94, Arg112, and Arg157. An FPG-type zinc finger spans residues 242–276; sequence FVYDRAGEPCRVCGAPIRQIVQGQRSTYFCPNCQR. The active-site Proton donor; for delta-elimination activity is the Arg266.

This sequence belongs to the FPG family. In terms of assembly, monomer. Requires Zn(2+) as cofactor.

It carries out the reaction Hydrolysis of DNA containing ring-opened 7-methylguanine residues, releasing 2,6-diamino-4-hydroxy-5-(N-methyl)formamidopyrimidine.. It catalyses the reaction 2'-deoxyribonucleotide-(2'-deoxyribose 5'-phosphate)-2'-deoxyribonucleotide-DNA = a 3'-end 2'-deoxyribonucleotide-(2,3-dehydro-2,3-deoxyribose 5'-phosphate)-DNA + a 5'-end 5'-phospho-2'-deoxyribonucleoside-DNA + H(+). Its function is as follows. Involved in base excision repair of DNA damaged by oxidation or by mutagenic agents. Acts as a DNA glycosylase that recognizes and removes damaged bases. Has a preference for oxidized purines, such as 7,8-dihydro-8-oxoguanine (8-oxoG). Has AP (apurinic/apyrimidinic) lyase activity and introduces nicks in the DNA strand. Cleaves the DNA backbone by beta-delta elimination to generate a single-strand break at the site of the removed base with both 3'- and 5'-phosphates. This chain is Formamidopyrimidine-DNA glycosylase, found in Burkholderia pseudomallei (strain 1710b).